The following is a 237-amino-acid chain: Listeriolysin regulatory protein (237 aa).

In terms of domain architecture, HTH crp-type spans 137 to 212 (NGKLGSICGQ…NSCFYVQNLD (76 aa)).

Positively regulates expression of listeriolysin, of 1-phosphadidylinositol phosphodiesterase (PI-PLC) and other virulence factors. The protein is Listeriolysin regulatory protein (prfA) of Listeria monocytogenes serovar 1/2a (strain ATCC BAA-679 / EGD-e).